The primary structure comprises 336 residues: MKLAIIAGDGIGPEVTAEAVKVLDAVVPGVQKTSYDLGARRFHATGEVLPDSVVAELRNHDAILLGAIGDPSVPSGVLERGLLLRLRFELDHHINLRPARLYPGVASPLSGNPGIDFVVVREGTEGPYTGNGGAIRVGTPNEVATEVSVNTAFGVRRVVADAFERARRRRKHLTLVHKTNVLTLAGGLWLRTVDEVGECYPDVEVAYQHVDAATIHMITDPGRFDVIVTDNLFGDIITDLAAAVCGGIGLAASGNIDATRANPSMFEPVHGSAPDIAGQGIADPTAAIMSVALLLSHLGEHDAAARVDRAVEAHLATRGSERLATSDVGERIAAAL.

Arginine 87, arginine 97, arginine 121, and aspartate 211 together coordinate substrate. Positions 211, 235, and 239 each coordinate Mg(2+). 271-283 (GSAPDIAGQGIAD) provides a ligand contact to NAD(+).

It belongs to the isocitrate and isopropylmalate dehydrogenases family. LeuB type 2 subfamily. As to quaternary structure, homodimer. Mg(2+) serves as cofactor. Mn(2+) is required as a cofactor.

The protein resides in the cytoplasm. The enzyme catalyses (2R,3S)-3-isopropylmalate + NAD(+) = 4-methyl-2-oxopentanoate + CO2 + NADH. Its pathway is amino-acid biosynthesis; L-leucine biosynthesis; L-leucine from 3-methyl-2-oxobutanoate: step 3/4. Functionally, catalyzes the oxidation of 3-carboxy-2-hydroxy-4-methylpentanoate (3-isopropylmalate) to 3-carboxy-4-methyl-2-oxopentanoate. The product decarboxylates to 4-methyl-2 oxopentanoate. The sequence is that of 3-isopropylmalate dehydrogenase from Mycobacterium bovis (strain ATCC BAA-935 / AF2122/97).